A 514-amino-acid chain; its full sequence is 2,3-bisphosphoglycerate-independent phosphoglycerate mutase (514 aa).

The Mn(2+) site is built by Asp-14 and Ser-64. The active-site Phosphoserine intermediate is Ser-64. Residues His-125, 155–156 (RD), Arg-187, Arg-193, 263–266 (RADR), and Lys-336 each bind substrate. Mn(2+)-binding residues include Asp-403, His-407, Asp-444, His-445, and His-463.

Belongs to the BPG-independent phosphoglycerate mutase family. In terms of assembly, monomer. Requires Mn(2+) as cofactor.

It catalyses the reaction (2R)-2-phosphoglycerate = (2R)-3-phosphoglycerate. Its pathway is carbohydrate degradation; glycolysis; pyruvate from D-glyceraldehyde 3-phosphate: step 3/5. Functionally, catalyzes the interconversion of 2-phosphoglycerate and 3-phosphoglycerate. The chain is 2,3-bisphosphoglycerate-independent phosphoglycerate mutase from Salmonella paratyphi B (strain ATCC BAA-1250 / SPB7).